Consider the following 250-residue polypeptide: Agamous-like MADS-box protein AGL9 homolog (250 aa).

The MADS-box domain maps to 3–57; the sequence is RGRVELKMIENKINRQVTFAKRRKRLLKKAYELSVLCDAEVALIIFSNRGKLYEF. The K-box domain occupies 87-177; the sequence is TQSSQQEYLK…KRRFEESSQA (91 aa).

As to expression, expressed in petals and weakly in sepals but not in the column (gynostemium).

The protein resides in the nucleus. Its function is as follows. Probable transcription factor active in inflorescence development and floral organogenesis. The chain is Agamous-like MADS-box protein AGL9 homolog from Aranda deborah (Orchid).